The following is a 364-amino-acid chain: Probable dual-specificity RNA methyltransferase RlmN (364 aa).

The Proton acceptor role is filled by E109. The Radical SAM core domain occupies 123 to 351 (PKARLTVCVS…VSVRYSRGLE (229 aa)). A disulfide bond links C130 and C356. [4Fe-4S] cluster-binding residues include C137, C141, and C144. S-adenosyl-L-methionine contacts are provided by residues 184-185 (GE), S214, 237-239 (SLH), and N313. C356 serves as the catalytic S-methylcysteine intermediate.

Belongs to the radical SAM superfamily. RlmN family. Requires [4Fe-4S] cluster as cofactor.

Its subcellular location is the cytoplasm. The catalysed reaction is adenosine(2503) in 23S rRNA + 2 reduced [2Fe-2S]-[ferredoxin] + 2 S-adenosyl-L-methionine = 2-methyladenosine(2503) in 23S rRNA + 5'-deoxyadenosine + L-methionine + 2 oxidized [2Fe-2S]-[ferredoxin] + S-adenosyl-L-homocysteine. It catalyses the reaction adenosine(37) in tRNA + 2 reduced [2Fe-2S]-[ferredoxin] + 2 S-adenosyl-L-methionine = 2-methyladenosine(37) in tRNA + 5'-deoxyadenosine + L-methionine + 2 oxidized [2Fe-2S]-[ferredoxin] + S-adenosyl-L-homocysteine. Functionally, specifically methylates position 2 of adenine 2503 in 23S rRNA and position 2 of adenine 37 in tRNAs. This is Probable dual-specificity RNA methyltransferase RlmN from Nostoc punctiforme (strain ATCC 29133 / PCC 73102).